Reading from the N-terminus, the 400-residue chain is ATP-dependent rRNA helicase RRP3 (400 aa).

A Q motif motif is present at residues 1–29 (MEFGDLRIDESLIKTCQEKGITRPTEVQR). In terms of domain architecture, Helicase ATP-binding spans 32 to 202 (IPAVLGGGDV…SSILKRPKTI (171 aa)). An ATP-binding site is contributed by 45-52 (SQTGSGKT). The DEAD box motif lies at 150–153 (DEAD). The region spanning 229–373 (ALVELLEMSQ…EFKMMKKNFG (145 aa)) is the Helicase C-terminal domain.

This sequence belongs to the DEAD box helicase family. DDX47/RRP3 subfamily. As to quaternary structure, interacts with the SSU processome.

It localises to the nucleus. The catalysed reaction is ATP + H2O = ADP + phosphate + H(+). Its function is as follows. ATP-dependent rRNA helicase required for pre-ribosomal RNA processing. Involved in the maturation of the 35S-pre-rRNA and to its cleavage to mature 18S rRNA. This is ATP-dependent rRNA helicase RRP3 from Encephalitozoon cuniculi (strain GB-M1) (Microsporidian parasite).